Consider the following 141-residue polypeptide: Putative nickel-responsive regulator (141 aa).

4 residues coordinate Ni(2+): His80, His91, His93, and Cys99.

It belongs to the transcriptional regulatory CopG/NikR family. Ni(2+) is required as a cofactor.

Transcriptional regulator. In Methanococcus maripaludis (strain DSM 14266 / JCM 13030 / NBRC 101832 / S2 / LL), this protein is Putative nickel-responsive regulator.